The primary structure comprises 439 residues: Damage-control phosphatase ARMT1 (439 aa).

At alanine 2 the chain carries N-acetylalanine. A Phosphoserine modification is found at serine 4. Residue lysine 40 is modified to N6-acetyllysine. Residues aspartate 251 and asparagine 252 each coordinate Mn(2+). A substrate-binding site is contributed by 251–252 (DN). Residues glutamate 256 and aspartate 289 each coordinate S-adenosyl-L-methionine. Residue aspartate 289 coordinates Mn(2+). Residues 365 to 369 (DLNYR) and lysine 402 each bind substrate. Residues 399 to 402 (RTLK) carry the Subfamily III RTxK motif motif.

Belongs to the damage-control phosphatase family. Sugar phosphate phosphatase III subfamily. Mn(2+) is required as a cofactor. The cofactor is Ni(2+). In terms of processing, automethylated.

It carries out the reaction beta-D-fructose 1-phosphate + H2O = D-fructose + phosphate. The catalysed reaction is beta-D-fructose 6-phosphate = dihydroxyacetone + D-glyceraldehyde 3-phosphate. It catalyses the reaction L-glutamyl-[protein] + S-adenosyl-L-methionine = [protein]-L-glutamate 5-O-methyl ester + S-adenosyl-L-homocysteine. Its function is as follows. Metal-dependent phosphatase that shows phosphatase activity against several substrates, including fructose-1-phosphate and fructose-6-phosphate. Its preference for fructose-1-phosphate, a strong glycating agent that causes DNA damage rather than a canonical yeast metabolite, suggests a damage-control function in hexose phosphate metabolism. Has also been shown to have O-methyltransferase activity that methylates glutamate residues of target proteins to form gamma-glutamyl methyl ester residues. Possibly methylates PCNA, suggesting it is involved in the DNA damage response. This is Damage-control phosphatase ARMT1 from Mus musculus (Mouse).